The following is an 80-amino-acid chain: MKLTCVLIIAVLFLTACQLATAKTYSTGRQKHRALRSTDKNIKLSRRCNDPGGSCTRHYHCCQLYCNKQESVCLENEPAF.

The N-terminal stretch at 1–22 (MKLTCVLIIAVLFLTACQLATA) is a signal peptide. Residues 23-45 (KTYSTGRQKHRALRSTDKNIKLS) constitute a propeptide that is removed on maturation. Disulfide bonds link cysteine 48–cysteine 62, cysteine 55–cysteine 66, and cysteine 61–cysteine 73.

It belongs to the conotoxin O1 superfamily. In terms of tissue distribution, expressed by the venom duct.

It is found in the secreted. Its function is as follows. When injected intracranially in mice, induces a series of symptoms such as quivering, climbing, scratching, barrel rolling and paralysis of limbs. Unexpectedly, no effect is observed on ionic currents when tested on locust DUM neuron. The polypeptide is Conotoxin Bt6.5 (Conus betulinus (Beech cone)).